Here is a 92-residue protein sequence, read N- to C-terminus: MSRSVWKGPFVDSYVLKKAEKSKESGRNEVIKIWSRRSTILPQFVGLTFGVYNGRKHIPVNVTEDMIGQKFGEYSPTRTYYGHAADKKAKRK.

This sequence belongs to the universal ribosomal protein uS19 family.

In terms of biological role, protein S19 forms a complex with S13 that binds strongly to the 16S ribosomal RNA. This chain is Small ribosomal subunit protein uS19, found in Jannaschia sp. (strain CCS1).